A 762-amino-acid chain; its full sequence is cGMP-dependent protein kinase 2 (762 aa).

The disordered stretch occupies residues 1-26 (MGNGSVKPKHAKHPDGHSGNLSNEAL). A lipid anchor (N-myristoyl glycine) is attached at G2. Residues S110 and S117 each carry the phosphoserine modification. Residues 118–138 (RRGAKAGVSAEPTTRTYDLNK) are disordered. Positions 168–283 (FLKRLDPQQI…DEEYRNFLRS (116 aa)) are cGMP-binding, high affinity; cAMP-binding, moderate affinity. Residues 232-235 (GELA), 242-243 (RT), K347, 356-359 (GEKA), 366-367 (RS), D412, and R415 each bind 3',5'-cyclic GMP. The interval 286-416 (LLKNLPEDKL…TLNRDDEKRH (131 aa)) is cGMP-binding, high affinity; cAMP-binding, low affinity. The residue at position 431 (S431) is a Phosphoserine. In terms of domain architecture, Protein kinase spans 453 to 711 (LEIIATLGVG…INDIKKHRWL (259 aa)). ATP-binding positions include 459–467 (LGVGGFGRV) and K482. The active-site Proton acceptor is D576. T609 bears the Phosphothreonine mark. Residues 712-762 (NGFNWEGLKARSLPSPLRRELSGPIDHSYFDKYPPEKGVPPDEMSGWDKDF) enclose the AGC-kinase C-terminal domain. The interval 740–762 (YFDKYPPEKGVPPDEMSGWDKDF) is disordered.

It belongs to the protein kinase superfamily. AGC Ser/Thr protein kinase family. cGMP subfamily. Interacts with GRIA1/GLUR1. In terms of processing, myristoylation mediates membrane localization.

The protein resides in the apical cell membrane. The protein localises to the cell membrane. It catalyses the reaction L-seryl-[protein] + ATP = O-phospho-L-seryl-[protein] + ADP + H(+). The enzyme catalyses L-threonyl-[protein] + ATP = O-phospho-L-threonyl-[protein] + ADP + H(+). With respect to regulation, binding of cGMP results in enzyme activation. In terms of biological role, crucial regulator of intestinal secretion and bone growth. Phosphorylates and activates CFTR on the plasma membrane. Plays a key role in intestinal secretion by regulating cGMP-dependent translocation of CFTR in jejunum. Acts downstream of NMDAR to activate the plasma membrane accumulation of GRIA1/GLUR1 in synapse and increase synaptic plasticity. Phosphorylates GRIA1/GLUR1 at Ser-863. Acts as a regulator of gene expression and activator of the extracellular signal-regulated kinases MAPK3/ERK1 and MAPK1/ERK2 in mechanically stimulated osteoblasts. Under fluid shear stress, mediates ERK activation and subsequent induction of FOS, FOSL1/FRA1, FOSL2/FRA2 and FOSB that play a key role in the osteoblast anabolic response to mechanical stimulation. The chain is cGMP-dependent protein kinase 2 (Prkg2) from Mus musculus (Mouse).